A 320-amino-acid chain; its full sequence is uncharacterized protein (320 aa).

46–53 (DVPGVGKT) contributes to the ATP binding site.

Belongs to the MoxR family.

This is an uncharacterized protein from Bacillus subtilis (strain 168).